Here is a 132-residue protein sequence, read N- to C-terminus: Small ribosomal subunit protein uS8 (132 aa).

Belongs to the universal ribosomal protein uS8 family. In terms of assembly, part of the 30S ribosomal subunit. Contacts proteins S5 and S12.

Functionally, one of the primary rRNA binding proteins, it binds directly to 16S rRNA central domain where it helps coordinate assembly of the platform of the 30S subunit. In Bartonella quintana (strain Toulouse) (Rochalimaea quintana), this protein is Small ribosomal subunit protein uS8.